The chain runs to 164 residues: Monothiol glutaredoxin-S10 (164 aa).

One can recognise a Glutaredoxin domain in the interval glutamate 60–valine 161. [2Fe-2S] cluster is bound at residue cysteine 80.

Belongs to the glutaredoxin family. CPYC subfamily.

It localises to the cytoplasm. In terms of biological role, may only reduce GSH-thiol disulfides, but not protein disulfides. This Oryza sativa subsp. japonica (Rice) protein is Monothiol glutaredoxin-S10 (GRXS10).